The chain runs to 518 residues: Probable pectinesterase/pectinesterase inhibitor 16 (518 aa).

The N-terminal stretch at 1–33 (MASSSSISNHKIPNTLMFLVIVNFLYLIQTNSA) is a signal peptide. Residues 30–172 (TNSAVSISSN…TGLLTSSLDL (143 aa)) form a pectinesterase inhibitor 16 region. Residues Asn82 and Asn161 are each glycosylated (N-linked (GlcNAc...) asparagine). The interval 213–502 (DAVVAPDGSG…FTVASFIDGN (290 aa)) is pectinesterase 16. Positions 289 and 319 each coordinate substrate. The active-site Proton donor; for pectinesterase activity is the Asp342. The active-site Nucleophile; for pectinesterase activity is the Asp363. Residues Arg422 and Trp424 each coordinate substrate.

In the N-terminal section; belongs to the PMEI family. It in the C-terminal section; belongs to the pectinesterase family. Expressed in siliques and floral stems.

Its subcellular location is the secreted. The protein localises to the cell wall. It carries out the reaction [(1-&gt;4)-alpha-D-galacturonosyl methyl ester](n) + n H2O = [(1-&gt;4)-alpha-D-galacturonosyl](n) + n methanol + n H(+). It functions in the pathway glycan metabolism; pectin degradation; 2-dehydro-3-deoxy-D-gluconate from pectin: step 1/5. Acts in the modification of cell walls via demethylesterification of cell wall pectin. This is Probable pectinesterase/pectinesterase inhibitor 16 (PME16) from Arabidopsis thaliana (Mouse-ear cress).